The primary structure comprises 112 residues: Integration host factor subunit alpha (112 aa).

The protein belongs to the bacterial histone-like protein family. As to quaternary structure, heterodimer of an alpha and a beta chain.

In terms of biological role, this protein is one of the two subunits of integration host factor, a specific DNA-binding protein that functions in genetic recombination as well as in transcriptional and translational control. The chain is Integration host factor subunit alpha from Agrobacterium fabrum (strain C58 / ATCC 33970) (Agrobacterium tumefaciens (strain C58)).